The sequence spans 269 residues: Voltage-gated hydrogen channel 1 (269 aa).

Residues 1–96 are Cytoplasmic-facing; it reads MTSHDPKAVT…RLRKLFSSHR (96 aa). Phosphothreonine is present on Thr-29. The interval 46–79 is disordered; sequence ENEEEEEEPAPTSAEGEGNAEGPDAEAGSASTPR. Ser-93 is modified (phosphoserine). A helical membrane pass occupies residues 97–117; that stretch reads FQVIIICLVVLDALLVLAELL. Topologically, residues 118–134 are extracellular; sequence LDLKIIEPDEQDYAVTA. A helical membrane pass occupies residues 135 to 157; the sequence is FHYMSFAILVFFMLEIFFKIFVF. Over 158-165 the chain is Cytoplasmic; sequence RLEFFHHK. Residues 166 to 186 form a helical membrane-spanning segment; it reads FEILDAFVVVVSFVLDLVLLF. The Extracellular portion of the chain corresponds to 187 to 193; it reads KSHHFEA. The chain crosses the membrane as a helical span at residues 194-214; the sequence is LGLLILLRLWRVARIINGIII. The Cytoplasmic segment spans residues 215–269; sequence SVKTRSERQILRLKQINIQLATKIQHLEFSCSEKEQEIERLNKLLKQNGLLGDVN. Residues 221–261 adopt a coiled-coil conformation; that stretch reads ERQILRLKQINIQLATKIQHLEFSCSEKEQEIERLNKLLKQ.

Belongs to the voltage-gated proton channel (VPC) (TC 1.A.51) family. In terms of assembly, homodimer; each protomer forms its own proton conduction pathway. Phosphorylated in vitro by PRKCD. Phosphorylation may enhance channel gating. As to expression, enriched in immune tissues, such as bone marrow, macrophages and spleen.

It is found in the cell membrane. The protein resides in the apical cell membrane. The protein localises to the cytoplasmic vesicle. Its subcellular location is the phagosome membrane. It localises to the cell projection. It is found in the cilium. The protein resides in the flagellum membrane. It carries out the reaction H(+)(in) = H(+)(out). Its activity is regulated as follows. The dimers display cooperative channel gating. The channel activity is inhibited by zinc ions. Voltage-gated proton-selective channel that conducts outward proton currents in response to intracellular acidification. Lacks a canonical ion-channel pore domain and mediates proton permeability via its voltage sensor domain. Provides for proton efflux that compensates for electron charge generated by NADPH oxidase activity either in the extracellular or phagosomal compartments, thus enabling the production of high levels of bactericidal reactive oxygen species during the respiratory burst. Opens when the pH of airway surface liquid exceeds 7 and contributes to respiratory epithelial acid secretion to maintain pH in the mucosa. This Mus musculus (Mouse) protein is Voltage-gated hydrogen channel 1.